The sequence spans 339 residues: Peroxidase 29 (339 aa).

Positions 1–28 (MKPKSKVAESTAASCFLVMSLLCSCIIG) are cleaved as a signal peptide. 4 cysteine pairs are disulfide-bonded: Cys-47–Cys-127, Cys-80–Cys-85, Cys-133–Cys-335, and Cys-213–Cys-242. His-78 (proton acceptor) is an active-site residue. Ca(2+) is bound by residues Asp-79, Val-82, Gly-84, Asp-86, and Ser-88. Pro-176 serves as a coordination point for substrate. His-206 is a binding site for heme b. Position 207 (Thr-207) interacts with Ca(2+). Asn-224 carries N-linked (GlcNAc...) asparagine glycosylation. Positions 260, 262, and 267 each coordinate Ca(2+).

The protein belongs to the peroxidase family. Classical plant (class III) peroxidase subfamily. Requires heme b as cofactor. It depends on Ca(2+) as a cofactor.

It localises to the secreted. It catalyses the reaction 2 a phenolic donor + H2O2 = 2 a phenolic radical donor + 2 H2O. Functionally, removal of H(2)O(2), oxidation of toxic reductants, biosynthesis and degradation of lignin, suberization, auxin catabolism, response to environmental stresses such as wounding, pathogen attack and oxidative stress. These functions might be dependent on each isozyme/isoform in each plant tissue. This chain is Peroxidase 29 (PER29), found in Arabidopsis thaliana (Mouse-ear cress).